The primary structure comprises 154 residues: 6,7-dimethyl-8-ribityllumazine synthase (154 aa).

Residues F22, 56–58, and 81–83 each bind 5-amino-6-(D-ribitylamino)uracil; these read SFE and VLI. 86–87 contacts (2S)-2-hydroxy-3-oxobutyl phosphate; that stretch reads ET. The Proton donor role is filled by H89. F114 is a 5-amino-6-(D-ribitylamino)uracil binding site. R128 lines the (2S)-2-hydroxy-3-oxobutyl phosphate pocket.

Belongs to the DMRL synthase family.

The enzyme catalyses (2S)-2-hydroxy-3-oxobutyl phosphate + 5-amino-6-(D-ribitylamino)uracil = 6,7-dimethyl-8-(1-D-ribityl)lumazine + phosphate + 2 H2O + H(+). It participates in cofactor biosynthesis; riboflavin biosynthesis; riboflavin from 2-hydroxy-3-oxobutyl phosphate and 5-amino-6-(D-ribitylamino)uracil: step 1/2. In terms of biological role, catalyzes the formation of 6,7-dimethyl-8-ribityllumazine by condensation of 5-amino-6-(D-ribitylamino)uracil with 3,4-dihydroxy-2-butanone 4-phosphate. This is the penultimate step in the biosynthesis of riboflavin. The protein is 6,7-dimethyl-8-ribityllumazine synthase of Chlamydia caviae (strain ATCC VR-813 / DSM 19441 / 03DC25 / GPIC) (Chlamydophila caviae).